The chain runs to 159 residues: NADH-quinone oxidoreductase subunit B (159 aa).

Positions 36, 37, 102, and 132 each coordinate [4Fe-4S] cluster.

This sequence belongs to the complex I 20 kDa subunit family. NDH-1 is composed of 14 different subunits. Subunits NuoB, C, D, E, F, and G constitute the peripheral sector of the complex. [4Fe-4S] cluster serves as cofactor.

It localises to the cell inner membrane. It catalyses the reaction a quinone + NADH + 5 H(+)(in) = a quinol + NAD(+) + 4 H(+)(out). NDH-1 shuttles electrons from NADH, via FMN and iron-sulfur (Fe-S) centers, to quinones in the respiratory chain. Couples the redox reaction to proton translocation (for every two electrons transferred, four hydrogen ions are translocated across the cytoplasmic membrane), and thus conserves the redox energy in a proton gradient. The protein is NADH-quinone oxidoreductase subunit B of Paracidovorax citrulli (strain AAC00-1) (Acidovorax citrulli).